The primary structure comprises 380 residues: Lipid-A-disaccharide synthase (380 aa).

This sequence belongs to the LpxB family.

The enzyme catalyses a lipid X + a UDP-2-N,3-O-bis[(3R)-3-hydroxyacyl]-alpha-D-glucosamine = a lipid A disaccharide + UDP + H(+). It participates in bacterial outer membrane biogenesis; LPS lipid A biosynthesis. Functionally, condensation of UDP-2,3-diacylglucosamine and 2,3-diacylglucosamine-1-phosphate to form lipid A disaccharide, a precursor of lipid A, a phosphorylated glycolipid that anchors the lipopolysaccharide to the outer membrane of the cell. This is Lipid-A-disaccharide synthase from Pseudomonas syringae pv. tomato (strain ATCC BAA-871 / DC3000).